Here is an 81-residue protein sequence, read N- to C-terminus: 8.6 kDa transglutaminase substrate (81 aa).

In terms of assembly, multimeric. Hemolymph; Hemocyte.

The protein is 8.6 kDa transglutaminase substrate of Tachypleus tridentatus (Japanese horseshoe crab).